The chain runs to 92 residues: MGLKEDFEEHAEKVKKLTASPSNEDLLILYGLYKQATVGPVTTSRPGMFSMKERAKWDAWKAVEGKSTDEAMSDYITKVKQLLEAEASSASA.

In terms of domain architecture, ACB spans Leu3–Ser88. An acyl-CoA-binding positions include Tyr30–Lys34, Lys56, and Tyr75.

The protein belongs to the ACBP family.

Functionally, binds medium- and long-chain acyl-CoA esters with very high affinity and may function as an intracellular carrier of acyl-CoA esters. The chain is Acyl-CoA-binding protein from Brassica napus (Rape).